Here is a 502-residue protein sequence, read N- to C-terminus: TGF-beta-activated kinase 1 and MAP3K7-binding protein 1 (502 aa).

The interval 1-21 (MAAQRRSLLQSEQQPSWTDDL) is disordered. S7 carries the post-translational modification Phosphoserine. Over residues 7 to 17 (SLLQSEQQPSW) the composition is skewed to polar residues. Residues 28–365 (GVGSASNRSY…EDMTLLVRNF (338 aa)) enclose the PPM-type phosphatase domain. An O-linked (GlcNAc) serine glycan is attached at S393. Over residues 414 to 437 (QMVNGSHSASTLDEATPTLTNQSP) the composition is skewed to polar residues. Residues 414–476 (QMVNGSHSAS…SLPPGEDGRV (63 aa)) are disordered. Residue S421 is modified to Phosphoserine. Residue T429 is modified to Phosphothreonine. Phosphoserine is present on S436. A compositionally biased stretch (low complexity) spans 438-455 (TLTLQSTNTHTQSSSSSS). Position 440 is a phosphothreonine (T440).

Interacts with XIAP and BIRC7. Interacts with TRAF6 and MAP3K7; during IL-1 signaling. Identified in the TRIKA2 complex composed of MAP3K7, TAB1 and TAB2. Interacts with TRAF6 and MAPK14; these interactions allow MAPK14 autophosphorylation. Interacts with STING1; interaction takes place following cGAMP activation and promotes TAB1 recruitment to the endoplasmic reticulum, triggering MAP3K7/TAK1 activation and STING1 phosphorylation. Post-translationally, phosphorylated at all three sites Ser-421, Thr-429 and Ser-436 by MAPK14 when cells were exposed to cellular stresses, or stimulated with TNF-alpha, IL1 or LPS. These phosphorylations inhibit TAK1 activation by a feedback control mechanism. Dephosphorylated by DUSP14 at Ser-436, leading to TAB1-MAP3K7/TAK1 complex inactivation in T-cells. Ubiquitinated by MAP3K1 with 'Lys-63'-linked polyubiquitin; leading to activation of TAK1 and of JNK and p38 MAP kinases following EGF and TGF-beta stimulation. Ubiquitinated by ITCH with 'Lys-48'-linked polyubiquitin; leading to proteasomal degradation. Ubiquitinated by RNF114 during maternal-to-zygotic transition; leading to degradation. In terms of processing, O-GlcNAcylated at Ser-393 is required for full MAP3K7/TAK1 activation upon stimulation with IL-1 or osmotic stress.

The protein resides in the cytoplasm. Its subcellular location is the cytosol. It localises to the endoplasmic reticulum membrane. In terms of biological role, key adapter protein that plays an essential role in JNK and NF-kappa-B activation and proinflammatory cytokines production in response to stimulation with TLRs and cytokines. Mechanistically, associates with the catalytic domain of MAP3K7/TAK1 to trigger MAP3K7/TAK1 autophosphorylation leading to its full activation. Similarly, associates with MAPK14 and triggers its autophosphorylation and subsequent activation. In turn, MAPK14 phosphorylates TAB1 and inhibits MAP3K7/TAK1 activation in a feedback control mechanism. Also plays a role in recruiting MAPK14 to the TAK1 complex for the phosphorylation of the TAB2 and TAB3 regulatory subunits. The chain is TGF-beta-activated kinase 1 and MAP3K7-binding protein 1 (Tab1) from Mus musculus (Mouse).